The primary structure comprises 364 residues: Eukaryotic translation initiation factor 3 subunit H (364 aa).

One can recognise an MPN domain in the interval 13 to 162; it reads VQVDALVAIK…LRAYRLSPSF (150 aa).

This sequence belongs to the eIF-3 subunit H family. As to quaternary structure, component of the eukaryotic translation initiation factor 3 (eIF-3) complex.

It is found in the cytoplasm. Functionally, component of the eukaryotic translation initiation factor 3 (eIF-3) complex, which is involved in protein synthesis of a specialized repertoire of mRNAs and, together with other initiation factors, stimulates binding of mRNA and methionyl-tRNAi to the 40S ribosome. The eIF-3 complex specifically targets and initiates translation of a subset of mRNAs involved in cell proliferation. This is Eukaryotic translation initiation factor 3 subunit H from Phaeosphaeria nodorum (strain SN15 / ATCC MYA-4574 / FGSC 10173) (Glume blotch fungus).